Consider the following 432-residue polypeptide: D-amino acid dehydrogenase (432 aa).

Residue valine 3–tryptophan 17 participates in FAD binding.

The protein belongs to the DadA oxidoreductase family. The cofactor is FAD.

The enzyme catalyses a D-alpha-amino acid + A + H2O = a 2-oxocarboxylate + AH2 + NH4(+). It functions in the pathway amino-acid degradation; D-alanine degradation; NH(3) and pyruvate from D-alanine: step 1/1. In terms of biological role, oxidative deamination of D-amino acids. The protein is D-amino acid dehydrogenase of Shigella dysenteriae serotype 1 (strain Sd197).